A 464-amino-acid chain; its full sequence is V-type ATP synthase beta chain (464 aa).

This sequence belongs to the ATPase alpha/beta chains family.

Its function is as follows. Produces ATP from ADP in the presence of a proton gradient across the membrane. The V-type beta chain is a regulatory subunit. This chain is V-type ATP synthase beta chain, found in Streptococcus sanguinis (strain SK36).